Reading from the N-terminus, the 521-residue chain is Bifunctional purine biosynthesis protein PurH (521 aa).

In terms of domain architecture, MGS-like spans M1–V145.

Belongs to the PurH family.

The enzyme catalyses (6R)-10-formyltetrahydrofolate + 5-amino-1-(5-phospho-beta-D-ribosyl)imidazole-4-carboxamide = 5-formamido-1-(5-phospho-D-ribosyl)imidazole-4-carboxamide + (6S)-5,6,7,8-tetrahydrofolate. It carries out the reaction IMP + H2O = 5-formamido-1-(5-phospho-D-ribosyl)imidazole-4-carboxamide. It functions in the pathway purine metabolism; IMP biosynthesis via de novo pathway; 5-formamido-1-(5-phospho-D-ribosyl)imidazole-4-carboxamide from 5-amino-1-(5-phospho-D-ribosyl)imidazole-4-carboxamide (10-formyl THF route): step 1/1. Its pathway is purine metabolism; IMP biosynthesis via de novo pathway; IMP from 5-formamido-1-(5-phospho-D-ribosyl)imidazole-4-carboxamide: step 1/1. This chain is Bifunctional purine biosynthesis protein PurH, found in Burkholderia cenocepacia (strain HI2424).